We begin with the raw amino-acid sequence, 559 residues long: Thermosome subunit alpha (559 aa).

Over residues 535-547 the composition is skewed to basic and acidic residues; it reads SEKKGGEGSKEES. The tract at residues 535–559 is disordered; that stretch reads SEKKGGEGSKEESGGEGGSTPSLGD.

Belongs to the TCP-1 chaperonin family. In terms of assembly, forms a Heterooligomeric complex of two stacked eight-membered rings.

Its function is as follows. Molecular chaperone; binds unfolded polypeptides in vitro, and has a weak ATPase activity. This Saccharolobus solfataricus (strain ATCC 35092 / DSM 1617 / JCM 11322 / P2) (Sulfolobus solfataricus) protein is Thermosome subunit alpha (thsA).